The sequence spans 532 residues: Beta-hexosaminidase subunit A1 (532 aa).

Residues 1 to 18 (MIKKIILFFAVLIAIVIG) form the signal peptide. N-linked (GlcNAc...) asparagine glycans are attached at residues Asn72 and Asn79. Glu308 functions as the Proton donor in the catalytic mechanism. 2 N-linked (GlcNAc...) asparagine glycosylation sites follow: Asn350 and Asn427.

The protein belongs to the glycosyl hydrolase 20 family. Dimer. The N-terminus is blocked. Post-translationally, N-glycosylated.

Its subcellular location is the lysosome. It carries out the reaction Hydrolysis of terminal non-reducing N-acetyl-D-hexosamine residues in N-acetyl-beta-D-hexosaminides.. In terms of biological role, responsible for the degradation of GM2 gangliosides, and a variety of other molecules containing terminal N-acetyl hexosamines. This enzyme plays a role during the slug stage of development in the maintenance of pseudoplasmodia of normal size. This is Beta-hexosaminidase subunit A1 (hexa1) from Dictyostelium discoideum (Social amoeba).